The following is a 130-amino-acid chain: Small ribosomal subunit protein uS9 (130 aa).

It belongs to the universal ribosomal protein uS9 family.

The protein is Small ribosomal subunit protein uS9 of Aromatoleum aromaticum (strain DSM 19018 / LMG 30748 / EbN1) (Azoarcus sp. (strain EbN1)).